The chain runs to 294 residues: Filamin-B (294 aa).

2 Filamin repeats span residues 1-67 (GTRL…KVRV) and 71-163 (GQAG…KAKV). 2 positions are modified to phosphoserine: serine 61 and serine 157. A Glycyl lysine isopeptide (Lys-Gly) (interchain with G-Cter in ISG15) cross-link involves residue lysine 160. A hinge 2 region spans residues 164 to 198 (TGQRLVGPGSTNETSSILVESVTRSSTETCYSAIP). Residues 164–294 (TGQRLVGPGS…PGSPFHVTVP (131 aa)) form a self-association site, tail region. Serine 173 and serine 184 each carry phosphoserine. Residues 199–293 (KASSDASKVT…IPGSPFHVTV (95 aa)) form a Filamin 24 repeat. N6-succinyllysine is present on residues lysine 210 and lysine 216. Lysine 268 carries the post-translational modification N6-acetyllysine.

It belongs to the filamin family. In terms of assembly, homodimer. Interacts with FLNA, FLNC, INPPL1, ITGB1A, ITGB1D, ITGB3, ITGB6, MYOT, MYOZ1, PSEN1 and PSEN2. Interacts with MICALL2. Interacts with RFLNA and RFLNB. Interacts with HTLV-I viral p13 protein. Interacts with ASB2; the interaction targets FLNB for proteasomal degradation. In terms of processing, ISGylation prevents ability to interact with the upstream activators of the JNK cascade and inhibits IFNA-induced JNK signaling. Post-translationally, ubiquitination by a SCF-like complex containing ASB2 leads to proteasomal degradation which promotes muscle differentiation.

The protein resides in the cytoplasm. The protein localises to the cell cortex. It is found in the cytoskeleton. Its subcellular location is the myofibril. It localises to the sarcomere. The protein resides in the z line. Connects cell membrane constituents to the actin cytoskeleton. May promote orthogonal branching of actin filaments and links actin filaments to membrane glycoproteins. Anchors various transmembrane proteins to the actin cytoskeleton. This Oryctolagus cuniculus (Rabbit) protein is Filamin-B (FLNB).